The sequence spans 258 residues: Ubiquinone/menaquinone biosynthesis C-methyltransferase UbiE (258 aa).

Residues 1–20 (MSESRTSADGGMETSYGFRE) form a disordered region. S-adenosyl-L-methionine is bound by residues threonine 81, aspartate 102, and 130–131 (NA).

It belongs to the class I-like SAM-binding methyltransferase superfamily. MenG/UbiE family.

It catalyses the reaction a 2-demethylmenaquinol + S-adenosyl-L-methionine = a menaquinol + S-adenosyl-L-homocysteine + H(+). The enzyme catalyses a 2-methoxy-6-(all-trans-polyprenyl)benzene-1,4-diol + S-adenosyl-L-methionine = a 5-methoxy-2-methyl-3-(all-trans-polyprenyl)benzene-1,4-diol + S-adenosyl-L-homocysteine + H(+). The protein operates within quinol/quinone metabolism; menaquinone biosynthesis; menaquinol from 1,4-dihydroxy-2-naphthoate: step 2/2. Its pathway is cofactor biosynthesis; ubiquinone biosynthesis. Its function is as follows. Methyltransferase required for the conversion of demethylmenaquinol (DMKH2) to menaquinol (MKH2) and the conversion of 2-polyprenyl-6-methoxy-1,4-benzoquinol (DDMQH2) to 2-polyprenyl-3-methyl-6-methoxy-1,4-benzoquinol (DMQH2). This Rhizobium etli (strain ATCC 51251 / DSM 11541 / JCM 21823 / NBRC 15573 / CFN 42) protein is Ubiquinone/menaquinone biosynthesis C-methyltransferase UbiE.